The following is a 296-amino-acid chain: Protoheme IX farnesyltransferase (296 aa).

Over 1–9 the chain is Cytoplasmic; the sequence is MMFKQYLQV. The chain crosses the membrane as a helical span at residues 10–28; that stretch reads TKPGIIFGNLISVIGGFLL. Residues 29–37 are Periplasmic-facing; sequence ASKGSIDYP. The chain crosses the membrane as a helical span at residues 38–56; it reads LFIYTLVGVSLVVASGCVF. Residues 57–78 lie on the Cytoplasmic side of the membrane; the sequence is NNYIDRDIDRKMERTKNRVLVK. Residues 79-97 form a helical membrane-spanning segment; that stretch reads GLISPGVSLVYATLLGIAG. The Periplasmic segment spans residues 98–107; the sequence is FMLLWFGANP. A helical membrane pass occupies residues 108–126; it reads LACWLGVMGFVVYVGVYSL. The Cytoplasmic segment spans residues 127 to 197; the sequence is YMKRHSVYGT…YQAANIPVLP (71 aa). Residues 198–216 traverse the membrane as a helical segment; it reads VIKGISVAKNHITLYIIAF. Topologically, residues 217–228 are periplasmic; sequence AVATLMLTLGGY. The chain crosses the membrane as a helical span at residues 229–247; that stretch reads AGYKYLVVAAAVSVWWLGM. Over 248-268 the chain is Cytoplasmic; that stretch reads ALRGYKVEDDKVWARKLFGFS. Residues 269–287 traverse the membrane as a helical segment; the sequence is IIAITALSIMMSVDFMVPN. Residues 288–296 are Periplasmic-facing; the sequence is SQNLLTYVW.

The protein belongs to the UbiA prenyltransferase family. Protoheme IX farnesyltransferase subfamily.

It localises to the cell inner membrane. It carries out the reaction heme b + (2E,6E)-farnesyl diphosphate + H2O = Fe(II)-heme o + diphosphate. It participates in porphyrin-containing compound metabolism; heme O biosynthesis; heme O from protoheme: step 1/1. Functionally, converts heme B (protoheme IX) to heme O by substitution of the vinyl group on carbon 2 of heme B porphyrin ring with a hydroxyethyl farnesyl side group. The sequence is that of Protoheme IX farnesyltransferase from Salmonella typhi.